The primary structure comprises 501 residues: U6 snRNA (guanine-N(2))-methyltransferase THUMPD2 (501 aa).

Residues 149–264 enclose the THUMP domain; sequence TEQIQELQET…DVYSVLGIPV (116 aa). Positions 414–469 are disordered; it reads LKGGEASSGPLNSQGGHTEEPGGEERLTPAEKAAVSEPVSSPFAASNQGRLDRMPP. Basic and acidic residues predominate over residues 430–442; that stretch reads HTEEPGGEERLTP.

This sequence belongs to the methyltransferase superfamily. In terms of assembly, part of the heterodimeric THUMPD2-TRM112 methyltransferase complex; this complex forms an active tRNA methyltransferase, where TRMT112 acts as an activator of the catalytic subunit THUMPD2.

Its subcellular location is the nucleus. The enzyme catalyses guanosine in U6 snRNA + S-adenosyl-L-methionine = N(2)-methylguanosine in U6 snRNA + S-adenosyl-L-homocysteine + H(+). In terms of biological role, catalytic subunit of the THUMPD2-TRM112 methyltransferase complex, that specifically mediates the S-adenosyl-L-methionine-dependent N(2)-methylation of guanosine nucleotides, most probably at position 72 (m2G72), in the U6snRNA of the major spliceosome. This modification in the U6 snRNA affects the constitutive splicing efficiency of introns that have suboptimal splice sites and can impact final mRNA levels. This chain is U6 snRNA (guanine-N(2))-methyltransferase THUMPD2, found in Bos taurus (Bovine).